The sequence spans 95 residues: MAVACGQDGVAGDCRFLGDLFVMWLEQSLSAILYVLTLLPMPDFMKGQSIGGMLGNAGSTILWFADVFMIGPALVMIGAAMIFFLLRRVLTLGIW.

3 helical membrane-spanning segments follow: residues 20 to 40, 44 to 64, and 66 to 86; these read LFVM…TLLP, FMKG…ILWF, and DVFM…FFLL.

It belongs to the inovirus G6P protein family. Interacts with G3P; this interaction is required for proper integration of G3P and G6P into the virion.

It is found in the virion. The protein localises to the host membrane. Its function is as follows. Plays essential roles both in the entry of the viral genome into the bacterial host and in budding process. The formation of the G3P-G6P complex termed adsorption complex is essential for correct termination of filamentous phage assembly. The protein is Head virion protein G6P (VI) of Xanthomonas phage phiLf (Bacteriophage phi-Lf).